A 163-amino-acid polypeptide reads, in one-letter code: Cytochrome c-type biogenesis protein CcmE (163 aa).

Over 1–8 (MNPRRKKR) the chain is Cytoplasmic. A helical; Signal-anchor for type II membrane protein transmembrane segment spans residues 9–29 (LTLAVALIVGVAGAASLLLYA). The Periplasmic portion of the chain corresponds to 30-163 (LNSNLNLFYT…QEGVEKTAQY (134 aa)). Positions 131 and 135 each coordinate heme.

The protein belongs to the CcmE/CycJ family.

Its subcellular location is the cell inner membrane. Functionally, heme chaperone required for the biogenesis of c-type cytochromes. Transiently binds heme delivered by CcmC and transfers the heme to apo-cytochromes in a process facilitated by CcmF and CcmH. This Shewanella denitrificans (strain OS217 / ATCC BAA-1090 / DSM 15013) protein is Cytochrome c-type biogenesis protein CcmE.